We begin with the raw amino-acid sequence, 764 residues long: MVTTHNLGFPRIGAKRELKFGLERYWKGESSRDELKALGAELRRRHWHDQRDLDLAPIGDFAFYDQVLDMSFTLGNLPKRVQDFHGDALDNYFRVARGRSAQSAEEHAACCGGVAAGEMTKWFDTNYHYIVPEFHADTNFSLDPSRLLQQLAEANAQGVNAKPVILGPVTYLWLGKAKDDSDRLALLPKLLPVYGALLDTLTAQGVEWVQIDEPILVTELDAEWRQAFRIAYAALETRRIKLLLATYFGQLQDNLTLAASLPVDGLHIDAINARDEVDALVRELPAERVLSVGAINGRNIWKTDLNAALDWLEPLAKQLGDRLWLAPSCSLLHVPVDLASEEKLDAEIRSWLAFALQKLDELKVLATALNEGRDKVADALAANAAAIDSRRRSPRVNNPAVKAAIARIDARLGNRTSPYTQRASKQSARLNLPAFPTTTIGSFPQTAEIRQARSRFKAGALDEAGYRKAMQAEIERSVREQESLELDVLVHGEAERNDMVEYFGEQLDGYAFSQFGWVQSYGSRCVKPPILFGDISRPKAMTVEWIAYAQSLTRKPMKGMLTGPVTILNWSFVRDDQPRAVSCYQLALAIREEVLDLEKAGVRVIQIDEAALREGLPLRRAQWSEYLKWAVESFRITANGVQDDTQIHTHMCYSEFNDIIASIADMDADVITIETSRSDMELLDAFDTFKYPNEIGPGVYDIHSPNIPTQDHIVGLMRKAAERIPAERLWVNPDCGLKTRQWAEVIPALTNMVAAAKMLRNQVQ.

5-methyltetrahydropteroyltri-L-glutamate-binding positions include 16–19 (RELK) and Lys121. Residues 440-442 (IGS) and Glu493 contribute to the L-homocysteine site. L-methionine-binding positions include 440–442 (IGS) and Glu493. Residues 524–525 (RC) and Trp570 each bind 5-methyltetrahydropteroyltri-L-glutamate. Asp608 is a binding site for L-homocysteine. Position 608 (Asp608) interacts with L-methionine. A 5-methyltetrahydropteroyltri-L-glutamate-binding site is contributed by Glu614. Positions 650, 652, and 674 each coordinate Zn(2+). His703 serves as the catalytic Proton donor. Cys735 is a Zn(2+) binding site.

Belongs to the vitamin-B12 independent methionine synthase family. Zn(2+) serves as cofactor.

It catalyses the reaction 5-methyltetrahydropteroyltri-L-glutamate + L-homocysteine = tetrahydropteroyltri-L-glutamate + L-methionine. It functions in the pathway amino-acid biosynthesis; L-methionine biosynthesis via de novo pathway; L-methionine from L-homocysteine (MetE route): step 1/1. Its function is as follows. Catalyzes the transfer of a methyl group from 5-methyltetrahydrofolate to homocysteine resulting in methionine formation. The protein is 5-methyltetrahydropteroyltriglutamate--homocysteine methyltransferase of Burkholderia orbicola (strain MC0-3).